Consider the following 49-residue polypeptide: uncharacterized protein (49 aa).

A helical membrane pass occupies residues 5-25 (LTTIFSVVIVLAIFLYFGLLI).

The protein belongs to the plectrovirus ORF12 protein family.

The protein resides in the host membrane. This is an uncharacterized protein from Spiroplasma virus SpV1-R8A2 B (SpV1).